A 235-amino-acid chain; its full sequence is 1-(5-phosphoribosyl)-5-[(5-phosphoribosylamino)methylideneamino] imidazole-4-carboxamide isomerase (235 aa).

The active-site Proton acceptor is Asp-8. The active-site Proton donor is the Asp-128.

This sequence belongs to the HisA/HisF family.

It is found in the cytoplasm. The catalysed reaction is 1-(5-phospho-beta-D-ribosyl)-5-[(5-phospho-beta-D-ribosylamino)methylideneamino]imidazole-4-carboxamide = 5-[(5-phospho-1-deoxy-D-ribulos-1-ylimino)methylamino]-1-(5-phospho-beta-D-ribosyl)imidazole-4-carboxamide. It participates in amino-acid biosynthesis; L-histidine biosynthesis; L-histidine from 5-phospho-alpha-D-ribose 1-diphosphate: step 4/9. The sequence is that of 1-(5-phosphoribosyl)-5-[(5-phosphoribosylamino)methylideneamino] imidazole-4-carboxamide isomerase from Thermus thermophilus (strain ATCC 27634 / DSM 579 / HB8).